A 541-amino-acid chain; its full sequence is Formimidoyltransferase-cyclodeaminase (541 aa).

Residues 1-181 (MSQLVECVPN…GATVTGARKF (181 aa)) are formiminotransferase N-subdomain. H82 (for formimidoyltransferase activity) is an active-site residue. 163-172 (GPSSFVPSWG) contributes to the folate binding site. The tract at residues 182–326 (LIAFNINLLS…PKERIIEYLV (145 aa)) is formiminotransferase C-subdomain. Positions 327-334 (PDSGPEQS) are linker. A cyclodeaminase/cyclohydrolase region spans residues 335–541 (LLDTSLRGFV…VLGSLEARKE (207 aa)). D412 serves as the catalytic For cyclodeaminase activity. The residue at position 520 (S520) is a Phosphoserine.

This sequence in the C-terminal section; belongs to the cyclodeaminase/cyclohydrolase family. The protein in the N-terminal section; belongs to the formiminotransferase family. In terms of assembly, homooctamer, including four polyglutamate binding sites. The subunits are arranged as a tetramer of dimers, and form a planar ring-shaped structure.

It is found in the cytoplasm. The protein resides in the cytoskeleton. It localises to the microtubule organizing center. The protein localises to the centrosome. Its subcellular location is the centriole. It is found in the golgi apparatus. The enzyme catalyses 5-formimidoyltetrahydrofolate + L-glutamate = N-formimidoyl-L-glutamate + (6S)-5,6,7,8-tetrahydrofolate. The catalysed reaction is (6S)-5-formyl-5,6,7,8-tetrahydrofolate + L-glutamate = N-formyl-L-glutamate + (6S)-5,6,7,8-tetrahydrofolate + H(+). It catalyses the reaction 5-formimidoyltetrahydrofolate + 2 H(+) = (6R)-5,10-methenyltetrahydrofolate + NH4(+). Its pathway is amino-acid degradation; L-histidine degradation into L-glutamate; L-glutamate from N-formimidoyl-L-glutamate (transferase route): step 1/1. It participates in one-carbon metabolism; tetrahydrofolate interconversion. Functionally, folate-dependent enzyme, that displays both transferase and deaminase activity. Serves to channel one-carbon units from formiminoglutamate to the folate pool. Binds and promotes bundling of vimentin filaments originating from the Golgi. This chain is Formimidoyltransferase-cyclodeaminase (Ftcd), found in Mus musculus (Mouse).